The chain runs to 521 residues: Probable ATP-dependent RNA helicase Dbp45A (521 aa).

The Q motif signature appears at 7–35 (NPFQILGLRPWLVKQLTKLGLKGATPIQQ). In terms of domain architecture, Helicase ATP-binding spans 38-209 (IPAILAGQDC…IFPIASDCFE (172 aa)). An ATP-binding site is contributed by 51–58 (AKTGSGKT). The DEAD box signature appears at 157 to 160 (DEAD). The Helicase C-terminal domain maps to 237-386 (VLIEALRKYR…EHPIDQRMVE (150 aa)). Positions 448-521 (KRKLQHAEPA…GRADVKKDKA (74 aa)) are disordered. Basic and acidic residues-rich tracts occupy residues 460–482 (EEGKALLQDERFKSVDSARFEKK) and 502–521 (LNKEKPVAQKGRADVKKDKA).

The protein belongs to the DEAD box helicase family. DDX49/DBP8 subfamily.

The enzyme catalyses ATP + H2O = ADP + phosphate + H(+). In terms of biological role, probable ATP-binding RNA helicase. In Drosophila melanogaster (Fruit fly), this protein is Probable ATP-dependent RNA helicase Dbp45A (Dbp45A).